A 580-amino-acid polypeptide reads, in one-letter code: CTP synthase (580 aa).

The Glutamine amidotransferase type-1 domain occupies 304-559 (NIILVGKYVS…VAASSGCLDE (256 aa)). Catalysis depends on for GATase activity residues Cys403, His532, and Glu534.

The protein belongs to the CTP synthase family.

The catalysed reaction is UTP + L-glutamine + ATP + H2O = CTP + L-glutamate + ADP + phosphate + 2 H(+). Its pathway is pyrimidine metabolism; CTP biosynthesis via de novo pathway; CTP from UDP: step 2/2. In terms of biological role, catalyzes the ATP-dependent amination of UTP to CTP with either L-glutamine or ammonia as the source of nitrogen. The polypeptide is CTP synthase (URA7) (Gibberella zeae (strain ATCC MYA-4620 / CBS 123657 / FGSC 9075 / NRRL 31084 / PH-1) (Wheat head blight fungus)).